A 1442-amino-acid chain; its full sequence is DNA polymerase III PolC-type (1442 aa).

Residues 409–568 (YVIFDIETTG…YDAIVLADVF (160 aa)) form the Exonuclease domain.

The protein belongs to the DNA polymerase type-C family. PolC subfamily.

Its subcellular location is the cytoplasm. It carries out the reaction DNA(n) + a 2'-deoxyribonucleoside 5'-triphosphate = DNA(n+1) + diphosphate. Its function is as follows. Required for replicative DNA synthesis. This DNA polymerase also exhibits 3' to 5' exonuclease activity. This Ureaplasma parvum serovar 3 (strain ATCC 700970) protein is DNA polymerase III PolC-type.